Consider the following 306-residue polypeptide: MVVRPHLHWFRMLLAWRGSVLPQLLPRLFLIFCISLVAMAVHVHWLPITVNLSTTPFSLIGIALAVFLGFRNNASYDRYWEARKLWGQLLNDARSMTRQALTLPRETLAAADVREFVQVLGALPHALRHQLRRTDPRDDLSARLPAPLFERVMASRYRPAALMLWLGEWVRQRSREGSLDAWAVLAFDRNLGSLSNVIGGCERIVSTPLPFAYSVMIHRTVYFFCAALPFGLVESIGNFTPVFSVFVAYAFMAHEAIAAQIEEPFGTEDNDLALNTMSLMIEDAVRDLIGEPSLGDEAAARAFILD.

4 consecutive transmembrane segments (helical) span residues 28–48 (LFLI…WLPI), 50–70 (VNLS…FLGF), 213–233 (YSVM…FGLV), and 239–259 (FTPV…AIAA).

This sequence belongs to the anion channel-forming bestrophin (TC 1.A.46) family.

Its subcellular location is the cell membrane. This is Voltage-dependent anion channel-forming protein RSc3414 from Ralstonia nicotianae (strain ATCC BAA-1114 / GMI1000) (Ralstonia solanacearum).